We begin with the raw amino-acid sequence, 451 residues long: Prenyltransferase anuH (451 aa).

Residues R105, K189, Y191, K257, Y259, and Y422 each contribute to the dimethylallyl diphosphate site.

This sequence belongs to the tryptophan dimethylallyltransferase family.

The enzyme catalyses (8S)-annullatin E + dimethylallyl diphosphate = (8S)-annullatin J + diphosphate. The protein operates within secondary metabolite biosynthesis. Functionally, cytochrome P450 monooxygenase; part of the gene cluster that mediates the biosynthesis of annullatin D, an alkylated aromatic polyketide with a fused dihydrobenzofuran lactone ring system that exhibits potent agonistic activities toward the cannabinoid receptors. Within the pathway, anuH uses dimethylallyl diphosphate (DMAPP) to prenylate (8S)-annullatin E to produce (8S)-annullatin J. Geranyl and farnesyl diphosphate are not consumed by anuH for prenylation. 2-hydroxymethyl-3-pentylphenol, without the hydroxyl group at the side chain, is also accepted by anuH, but only with low conversion yield. The annullatin backbone 2-hydroxymethyl-3-pentylphenol is assembled from one acetyl-CoA starter unit and 5 malonyl-CoA elongation units by cooperation of the highly reducing polyketide synthase anuA, the short-chain dehydrogenase anuB and the oxidoreductase anuC, before being hydroxylated at the C-5 alkyl chain by the cytochrome P450 monooxygenase anuE to form (8S)-annullatin E. The prenyltransferase anuH subsequently installs one isoprenyl group at the benzene ring to form (8S)-annullatin J. Enzymatic or nonenzymatic dihydro-benzofuran ring formation between the prenyl and the phenolic hydroxyl groups in (8S)-annullatin J results in two diastereomers (2S,9S)-annullatin H and compound 12. The intermediate (2S,9S)-annullatin H is then converted to (2S,9S)-annullatin D by the FAD-linked oxidoreductase anuG-catalyzed five-member lactone ring formation. The isomer 12 acts as a substrate for the short-chain dehydrogenase anuF and is oxidized to (2R)-annullatin F, which is subsequently acetylated by an acetyltransferase leading to (2R)-annullatin G formation. The remaining enzymes identified within the cluster, anuD, anuI and anuJ, seem not to be involved in annullatin biosynthesis. The chain is Prenyltransferase anuH from Penicillium roqueforti (strain FM164).